Here is a 536-residue protein sequence, read N- to C-terminus: Phosphoenolpyruvate carboxykinase (ATP) (536 aa).

Substrate contacts are provided by Arg-62, Tyr-203, and Lys-209. ATP contacts are provided by residues Lys-209, His-228, and 244–252; that span reads GLSGTGKTT. Residues Lys-209 and His-228 each contribute to the Mn(2+) site. Asp-265 contacts Mn(2+). ATP contacts are provided by residues Glu-293, Arg-329, 445–446, and Thr-451; that span reads RI. Arg-329 provides a ligand contact to substrate.

This sequence belongs to the phosphoenolpyruvate carboxykinase (ATP) family. Monomer. Mn(2+) serves as cofactor.

The protein localises to the cytoplasm. The enzyme catalyses oxaloacetate + ATP = phosphoenolpyruvate + ADP + CO2. The protein operates within carbohydrate biosynthesis; gluconeogenesis. Involved in the gluconeogenesis. Catalyzes the conversion of oxaloacetate (OAA) to phosphoenolpyruvate (PEP) through direct phosphoryl transfer between the nucleoside triphosphate and OAA. The polypeptide is Phosphoenolpyruvate carboxykinase (ATP) (Actinobacillus pleuropneumoniae serotype 7 (strain AP76)).